The following is a 429-amino-acid chain: Probable M18 family aminopeptidase 2 (429 aa).

Zn(2+)-binding residues include His-82, His-156, and His-401.

Belongs to the peptidase M18 family. It depends on Zn(2+) as a cofactor.

The polypeptide is Probable M18 family aminopeptidase 2 (Ectopseudomonas mendocina (strain ymp) (Pseudomonas mendocina)).